The primary structure comprises 691 residues: Threonine--tRNA ligase (691 aa).

The segment at 1 to 22 is disordered; sequence MSVPAQPAPGADGGDPRQPIRV. A TGS domain is found at 1–73; it reads MSVPAQPAPG…DADAEVTPIA (73 aa). The catalytic stretch occupies residues 268–574; sequence DHRKLGVELD…LTEHYAGAFP (307 aa). Residues C373, H424, and H551 each coordinate Zn(2+).

Belongs to the class-II aminoacyl-tRNA synthetase family. As to quaternary structure, homodimer. Requires Zn(2+) as cofactor.

The protein resides in the cytoplasm. It catalyses the reaction tRNA(Thr) + L-threonine + ATP = L-threonyl-tRNA(Thr) + AMP + diphosphate + H(+). In terms of biological role, catalyzes the attachment of threonine to tRNA(Thr) in a two-step reaction: L-threonine is first activated by ATP to form Thr-AMP and then transferred to the acceptor end of tRNA(Thr). Also edits incorrectly charged L-seryl-tRNA(Thr). The sequence is that of Threonine--tRNA ligase from Mycobacterium ulcerans (strain Agy99).